Reading from the N-terminus, the 89-residue chain is UPF0147 protein STK_04605 (89 aa).

This sequence belongs to the UPF0147 family.

This is UPF0147 protein STK_04605 from Sulfurisphaera tokodaii (strain DSM 16993 / JCM 10545 / NBRC 100140 / 7) (Sulfolobus tokodaii).